The following is a 146-amino-acid chain: VHLTGEEKSAVTALWGKVNVEEVGGEALGRLLVVYPWTQRFFESFGDLSTADAVMKNPNVKKHGQKVLASFGEGLKHLDDLKGTFAALSELHCDKLHVDPENFRLLGNVLVVVLARHFGKEFTPELQSAYQKVVAGVATALAHKYH.

Position 1 is an N-acetylvaline (Val1). Positions 2–146 constitute a Globin domain; that stretch reads HLTGEEKSAV…VATALAHKYH (145 aa). The residue at position 12 (Thr12) is a Phosphothreonine. Residue Ser44 is modified to Phosphoserine. His63 lines the heme b pocket. Lys82 carries the post-translational modification N6-acetyllysine. His92 provides a ligand contact to heme b. At Cys93 the chain carries S-nitrosocysteine. Lys144 carries the N6-acetyllysine modification.

It belongs to the globin family. As to quaternary structure, heterotetramer of two alpha chains and two beta chains. Red blood cells.

Involved in oxygen transport from the lung to the various peripheral tissues. The chain is Hemoglobin subunit beta (HBB) from Tursiops truncatus (Atlantic bottle-nosed dolphin).